We begin with the raw amino-acid sequence, 449 residues long: Gamma-glutamyl phosphate reductase (449 aa).

This sequence belongs to the gamma-glutamyl phosphate reductase family.

It localises to the cytoplasm. The enzyme catalyses L-glutamate 5-semialdehyde + phosphate + NADP(+) = L-glutamyl 5-phosphate + NADPH + H(+). Its pathway is amino-acid biosynthesis; L-proline biosynthesis; L-glutamate 5-semialdehyde from L-glutamate: step 2/2. Functionally, catalyzes the NADPH-dependent reduction of L-glutamate 5-phosphate into L-glutamate 5-semialdehyde and phosphate. The product spontaneously undergoes cyclization to form 1-pyrroline-5-carboxylate. The sequence is that of Gamma-glutamyl phosphate reductase from Methanococcoides burtonii (strain DSM 6242 / NBRC 107633 / OCM 468 / ACE-M).